Here is a 114-residue protein sequence, read N- to C-terminus: ATP synthase subunit c (114 aa).

The next 2 membrane-spanning stretches (helical) occupy residues 31–51 (AVFY…AAGG) and 88–108 (IETF…TGIF).

The protein belongs to the ATPase C chain family. F-type ATPases have 2 components, F(1) - the catalytic core - and F(0) - the membrane proton channel. F(1) has five subunits: alpha(3), beta(3), gamma(1), delta(1), epsilon(1). F(0) has three main subunits: a(1), b(2) and c(10-14). The alpha and beta chains form an alternating ring which encloses part of the gamma chain. F(1) is attached to F(0) by a central stalk formed by the gamma and epsilon chains, while a peripheral stalk is formed by the delta and b chains.

The protein localises to the cell inner membrane. Its function is as follows. F(1)F(0) ATP synthase produces ATP from ADP in the presence of a proton or sodium gradient. F-type ATPases consist of two structural domains, F(1) containing the extramembraneous catalytic core and F(0) containing the membrane proton channel, linked together by a central stalk and a peripheral stalk. During catalysis, ATP synthesis in the catalytic domain of F(1) is coupled via a rotary mechanism of the central stalk subunits to proton translocation. Functionally, key component of the F(0) channel; it plays a direct role in translocation across the membrane. A homomeric c-ring of between 10-14 subunits forms the central stalk rotor element with the F(1) delta and epsilon subunits. The protein is ATP synthase subunit c of Sulfurihydrogenibium sp. (strain YO3AOP1).